The chain runs to 341 residues: Methionine import ATP-binding protein MetN (341 aa).

The 240-residue stretch at 2 to 241 (IELNQIVKRY…PQHDVTKRFV (240 aa)) folds into the ABC transporter domain. 38-45 (GFSGAGKS) contacts ATP.

Belongs to the ABC transporter superfamily. Methionine importer (TC 3.A.1.24) family. The complex is composed of two ATP-binding proteins (MetN), two transmembrane proteins (MetI) and a solute-binding protein (MetQ).

It is found in the cell membrane. It catalyses the reaction L-methionine(out) + ATP + H2O = L-methionine(in) + ADP + phosphate + H(+). The catalysed reaction is D-methionine(out) + ATP + H2O = D-methionine(in) + ADP + phosphate + H(+). Functionally, part of the ABC transporter complex MetNIQ involved in methionine import. Responsible for energy coupling to the transport system. This is Methionine import ATP-binding protein MetN from Staphylococcus saprophyticus subsp. saprophyticus (strain ATCC 15305 / DSM 20229 / NCIMB 8711 / NCTC 7292 / S-41).